A 398-amino-acid polypeptide reads, in one-letter code: 1-deoxy-D-xylulose 5-phosphate reductoisomerase (398 aa).

NADPH-binding residues include Thr11, Gly12, Ser13, Ile14, Arg38, Asn39, and Asn125. Lys126 is a 1-deoxy-D-xylulose 5-phosphate binding site. Residue Glu127 coordinates NADPH. Asp151 lines the Mn(2+) pocket. 1-deoxy-D-xylulose 5-phosphate-binding residues include Ser152, Glu153, Ser179, and His202. Glu153 contributes to the Mn(2+) binding site. Gly208 lines the NADPH pocket. The 1-deoxy-D-xylulose 5-phosphate site is built by Ser215, Asn220, Lys221, and Glu224. Glu224 lines the Mn(2+) pocket.

It belongs to the DXR family. The cofactor is Mg(2+). Requires Mn(2+) as cofactor.

It carries out the reaction 2-C-methyl-D-erythritol 4-phosphate + NADP(+) = 1-deoxy-D-xylulose 5-phosphate + NADPH + H(+). It participates in isoprenoid biosynthesis; isopentenyl diphosphate biosynthesis via DXP pathway; isopentenyl diphosphate from 1-deoxy-D-xylulose 5-phosphate: step 1/6. Its function is as follows. Catalyzes the NADPH-dependent rearrangement and reduction of 1-deoxy-D-xylulose-5-phosphate (DXP) to 2-C-methyl-D-erythritol 4-phosphate (MEP). This is 1-deoxy-D-xylulose 5-phosphate reductoisomerase from Burkholderia vietnamiensis (strain G4 / LMG 22486) (Burkholderia cepacia (strain R1808)).